Reading from the N-terminus, the 475-residue chain is Protein FAM161A (475 aa).

Positions Ile-53 to Ser-107 are disordered. Low complexity-rich tracts occupy residues Ser-54–Lys-64 and Asp-82–Glu-93. Residues Val-162–Ala-234 are a coiled coil. Residues Lys-255 to Gln-434 are required for interaction with CFAP418. Positions Arg-314–Cys-337 are disordered. Residues Ala-327–Cys-337 are compositionally biased toward basic residues. Residue Lys-377 forms a Glycyl lysine isopeptide (Lys-Gly) (interchain with G-Cter in SUMO2) linkage. The tract at residues Glu-389 to Lys-441 is disordered. Over residues Pro-398–Pro-407 the composition is skewed to basic residues. Positions Arg-430–Lys-441 are enriched in basic and acidic residues.

The protein belongs to the FAM161 family. In terms of assembly, interacts (via central region) with CFAP418 (via N-terminus); the interaction is direct. Interacts (via C-terminus) with microtubules. Interacts with LCA5. Interacts with CEP290. Interacts with SDCCAG8. Interacts with FAM161B. Interacts with POC1B. Interacts with CEP78. Forms a microtubule-associated complex with POC5, CETN2 and POC1B. Interacts with CCDC15. Expressed in the retina.

Its subcellular location is the cytoplasm. It is found in the cytoskeleton. The protein localises to the cilium basal body. It localises to the cell projection. The protein resides in the cilium. Its subcellular location is the microtubule organizing center. It is found in the centrosome. The protein localises to the centriole. In terms of biological role, involved in ciliogenesis. The sequence is that of Protein FAM161A from Mus musculus (Mouse).